Reading from the N-terminus, the 258-residue chain is tRNA pseudouridine synthase A (258 aa).

The Nucleophile role is filled by aspartate 53. Tyrosine 111 contributes to the substrate binding site.

Belongs to the tRNA pseudouridine synthase TruA family. In terms of assembly, homodimer.

The enzyme catalyses uridine(38/39/40) in tRNA = pseudouridine(38/39/40) in tRNA. In terms of biological role, formation of pseudouridine at positions 38, 39 and 40 in the anticodon stem and loop of transfer RNAs. The polypeptide is tRNA pseudouridine synthase A (Streptococcus agalactiae serotype III (strain NEM316)).